The following is a 248-amino-acid chain: uncharacterized protein (248 aa).

The first 23 residues, 1 to 23 (MLKKIVIGVTATAAFGIGAGALA), serve as a signal peptide directing secretion.

The protein resides in the cell outer membrane. This is an uncharacterized protein from Coxiella burnetii (strain RSA 493 / Nine Mile phase I).